Reading from the N-terminus, the 86-residue chain is MLDLSQTIEKVGEKMPWPPKVFWVGLVVYYGFVALCWIGEATAGINHIPTAAFWYASFLGTFLIPLFMSIIYFYFPEKAEEARGGS.

2 helical membrane passes run 21 to 43 (VFWVGLVVYYGFVALCWIGEATA) and 53 to 75 (FWYASFLGTFLIPLFMSIIYFYF).

The protein resides in the cell membrane. This is an uncharacterized protein from Archaeoglobus fulgidus (strain ATCC 49558 / DSM 4304 / JCM 9628 / NBRC 100126 / VC-16).